Here is a 449-residue protein sequence, read N- to C-terminus: Trigger factor (449 aa).

Positions 173-258 (GDRVTVDFVG…MKKVEWPHLP (86 aa)) constitute a PPIase FKBP-type domain.

The protein belongs to the FKBP-type PPIase family. Tig subfamily.

It is found in the cytoplasm. The catalysed reaction is [protein]-peptidylproline (omega=180) = [protein]-peptidylproline (omega=0). Its function is as follows. Involved in protein export. Acts as a chaperone by maintaining the newly synthesized protein in an open conformation. Functions as a peptidyl-prolyl cis-trans isomerase. The polypeptide is Trigger factor (Burkholderia thailandensis (strain ATCC 700388 / DSM 13276 / CCUG 48851 / CIP 106301 / E264)).